Here is a 66-residue protein sequence, read N- to C-terminus: Small vasohibin-binding protein (66 aa).

The segment covering 1–23 (MDPPARKEKPKVKEPVSRIEKAK) has biased composition (basic and acidic residues). Residues 1 to 32 (MDPPARKEKPKVKEPVSRIEKAKQKSAQQELK) form a disordered region. Positions 5-52 (ARKEKPKVKEPVSRIEKAKQKSAQQELKQRQRAEIYALNRVMTELEQQ) form a coiled coil.

The protein belongs to the SVBP family. In terms of assembly, interacts with VASH1 and VASH2.

It is found in the cytoplasm. Its subcellular location is the secreted. It localises to the cytoskeleton. In terms of biological role, enhances the tyrosine carboxypeptidase activity of VASH1 and VASH2, thereby promoting the removal of the C-terminal tyrosine residue of alpha-tubulin. Also required to enhance the solubility and secretion of VASH1 and VASH2. Plays a role in axon and excitatory synapse formation. The sequence is that of Small vasohibin-binding protein from Bos taurus (Bovine).